The sequence spans 341 residues: tRNA N6-adenosine threonylcarbamoyltransferase (341 aa).

Fe cation contacts are provided by His-113 and His-117. Substrate-binding positions include 141–145 (LVSGG), Asp-174, Gly-187, and Asn-282. Asp-310 contacts Fe cation.

It belongs to the KAE1 / TsaD family. Fe(2+) serves as cofactor.

It is found in the cytoplasm. The catalysed reaction is L-threonylcarbamoyladenylate + adenosine(37) in tRNA = N(6)-L-threonylcarbamoyladenosine(37) in tRNA + AMP + H(+). In terms of biological role, required for the formation of a threonylcarbamoyl group on adenosine at position 37 (t(6)A37) in tRNAs that read codons beginning with adenine. Is involved in the transfer of the threonylcarbamoyl moiety of threonylcarbamoyl-AMP (TC-AMP) to the N6 group of A37, together with TsaE and TsaB. TsaD likely plays a direct catalytic role in this reaction. The chain is tRNA N6-adenosine threonylcarbamoyltransferase from Porphyromonas gingivalis (strain ATCC BAA-308 / W83).